The sequence spans 180 residues: O-acetyl-ADP-ribose deacetylase (180 aa).

Residues 1–175 enclose the Macro domain; that stretch reads MSGRINVVQG…LYQRLLGQYD (175 aa). Residues 11–12, N25, 33–35, and 122–126 each bind substrate; these read DI, GVD, and STGIY. D35 functions as the Proton acceptor in the catalytic mechanism.

This sequence belongs to the MacroD-type family. YmdB subfamily. As to quaternary structure, homodimer. Interacts with RNase III.

The enzyme catalyses 3''-O-acetyl-ADP-D-ribose + H2O = ADP-D-ribose + acetate + H(+). The catalysed reaction is 2''-O-acetyl-ADP-D-ribose + H2O = ADP-D-ribose + acetate + H(+). In terms of biological role, deacetylates O-acetyl-ADP ribose to yield ADP-ribose and free acetate. Down-regulates ribonuclease 3 (RNase III) activity. Acts by interacting directly with the region of the ribonuclease that is required for dimerization/activation. The sequence is that of O-acetyl-ADP-ribose deacetylase from Cronobacter sakazakii (strain ATCC BAA-894) (Enterobacter sakazakii).